Here is a 166-residue protein sequence, read N- to C-terminus: Peptidyl-prolyl cis-trans isomerase-like 1 (166 aa).

The 155-residue stretch at 10–164 folds into the PPIase cyclophilin-type domain; it reads QPPNVYLETS…DDVKILKAYP (155 aa). Residues 54–65, 70–71, 99–104, 109–113, Thr119, and Lys125 each bind cyclosporin A; these read HRIIKDFMIQGG, TG, AMANAG, and GSQFF. Ser149 bears the Phosphoserine mark.

It belongs to the cyclophilin-type PPIase family. PPIL1 subfamily. In terms of assembly, identified in the spliceosome C complex. Interacts with SNW1/SKIP. Interacts with CDC40/PRP17; this interaction leads to CDC40 isomerization. Interacts with RBM22.

The protein localises to the nucleus. The catalysed reaction is [protein]-peptidylproline (omega=180) = [protein]-peptidylproline (omega=0). Its activity is regulated as follows. Inhibited by Cyclosporin A. In terms of biological role, involved in pre-mRNA splicing as component of the spliceosome. PPIases accelerate the folding of proteins. It catalyzes the cis-trans isomerization of proline imidic peptide bonds in oligopeptides. Catalyzes prolyl peptide bond isomerization in CDC40/PRP17. Plays an important role in embryonic brain development; this function is independent of its isomerase activity. The chain is Peptidyl-prolyl cis-trans isomerase-like 1 (Ppil1) from Mus musculus (Mouse).